An 872-amino-acid chain; its full sequence is Alanine--tRNA ligase (872 aa).

4 residues coordinate Zn(2+): histidine 567, histidine 571, cysteine 669, and histidine 673.

This sequence belongs to the class-II aminoacyl-tRNA synthetase family. Zn(2+) is required as a cofactor.

The protein localises to the cytoplasm. It carries out the reaction tRNA(Ala) + L-alanine + ATP = L-alanyl-tRNA(Ala) + AMP + diphosphate. In terms of biological role, catalyzes the attachment of alanine to tRNA(Ala) in a two-step reaction: alanine is first activated by ATP to form Ala-AMP and then transferred to the acceptor end of tRNA(Ala). Also edits incorrectly charged Ser-tRNA(Ala) and Gly-tRNA(Ala) via its editing domain. The chain is Alanine--tRNA ligase from Streptococcus agalactiae serotype V (strain ATCC BAA-611 / 2603 V/R).